The following is a 289-amino-acid chain: 4-hydroxy-tetrahydrodipicolinate synthase (289 aa).

Thr-46 is a pyruvate binding site. Tyr-134 functions as the Proton donor/acceptor in the catalytic mechanism. Catalysis depends on Lys-162, which acts as the Schiff-base intermediate with substrate. Pyruvate is bound at residue Val-204.

This sequence belongs to the DapA family. In terms of assembly, homotetramer; dimer of dimers.

The protein localises to the cytoplasm. The catalysed reaction is L-aspartate 4-semialdehyde + pyruvate = (2S,4S)-4-hydroxy-2,3,4,5-tetrahydrodipicolinate + H2O + H(+). The protein operates within amino-acid biosynthesis; L-lysine biosynthesis via DAP pathway; (S)-tetrahydrodipicolinate from L-aspartate: step 3/4. Functionally, catalyzes the condensation of (S)-aspartate-beta-semialdehyde [(S)-ASA] and pyruvate to 4-hydroxy-tetrahydrodipicolinate (HTPA). The polypeptide is 4-hydroxy-tetrahydrodipicolinate synthase (Bacillus velezensis (strain DSM 23117 / BGSC 10A6 / LMG 26770 / FZB42) (Bacillus amyloliquefaciens subsp. plantarum)).